A 676-amino-acid polypeptide reads, in one-letter code: RNA helicase NPH-II (676 aa).

Positions 172-347 (FSAWISHRPV…VFLPNPAFIH (176 aa)) constitute a Helicase ATP-binding domain. 185-192 (GGTGVGKT) provides a ligand contact to ATP. Positions 296–299 (DEVH) match the DEXH box motif. The Helicase C-terminal domain maps to 366-535 (NPSSRMAYIE…NYILYANKFN (170 aa)).

The protein belongs to the DEAD box helicase family. DEAH subfamily. Monomer.

Its subcellular location is the virion. The catalysed reaction is ATP + H2O = ADP + phosphate + H(+). In terms of biological role, NTP-dependent helicase that catalyzes unidirectional unwinding of 3'tailed duplex RNAs and plays an important role during transcription of early mRNAs, presumably by preventing R-loop formation behind the elongating RNA polymerase. Might also play a role in the export of newly synthesized mRNA chains out of the core into the cytoplasm. Required for replication and propagation of viral particles. In Vaccinia virus (strain Copenhagen) (VACV), this protein is RNA helicase NPH-II (OPG084).